A 455-amino-acid polypeptide reads, in one-letter code: Kynurenine 3-monooxygenase (455 aa).

The protein belongs to the aromatic-ring hydroxylase family. KMO subfamily. Requires FAD as cofactor.

It catalyses the reaction L-kynurenine + NADPH + O2 + H(+) = 3-hydroxy-L-kynurenine + NADP(+) + H2O. The protein operates within cofactor biosynthesis; NAD(+) biosynthesis; quinolinate from L-kynurenine: step 1/3. Its function is as follows. Catalyzes the hydroxylation of L-kynurenine (L-Kyn) to form 3-hydroxy-L-kynurenine (L-3OHKyn). Required for synthesis of quinolinic acid. This chain is Kynurenine 3-monooxygenase, found in Stenotrophomonas maltophilia (strain K279a).